The chain runs to 353 residues: Protein Wnt-11b (353 aa).

Positions 1–22 (MAPTRHWVTPLLLLCCSGICGA) are cleaved as a signal peptide. N-linked (GlcNAc...) asparagine glycosylation is found at Asn31, Asn38, and Asn88. Cystine bridges form between Cys78-Cys89, Cys128-Cys136, Cys138-Cys155, Cys208-Cys222, and Cys210-Cys217. Ser214 is lipidated: O-palmitoleoyl serine; by PORCN. A sulfotyrosine mark is found at Tyr274 and Tyr281. 6 disulfide bridges follow: Cys282/Cys313, Cys298/Cys308, Cys312/Cys352, Cys328/Cys343, Cys330/Cys340, and Cys335/Cys336. Asn299 is a glycosylation site (N-linked (GlcNAc...) asparagine).

This sequence belongs to the Wnt family. In terms of assembly, homodimer. Secreted homodimers form a complex with wnt5a homodimers; tyrosine sulfation of both wnt11 and wnt5a by tpst1 is required for this interaction. Interacts with the transmembrane receptor fzd7/fz7. Interacts with lrp6 and ryk. Interacts with tdgf1/frl1. Interacts weakly with frzb1 and strongly with frzb2/crescent. Interaction with frzb2/crescent antagonizes wnt11 function in the neuroectoderm, but enhances it in mesodermal tissue. Post-translationally, glycosylation is required for protein secretion. In terms of processing, palmitoleoylation is required for efficient binding to frizzled receptors. Depalmitoleoylation leads to Wnt signaling pathway inhibition. In terms of tissue distribution, transcripts are expressed ubiquitously in early oocytes but become vegetally localized during mid-oogenesis then enriched on the dorsal side by the 8 to 16 cell stage. The protein becomes asymmetrically concentrated on the dorsal side by the 64-cell stage. During gastrulation, expressed in the lateral and ventral marginal zone, and during tadpole stages in the somites and first branchial arch. Weakly expressed in the pronephros from at least stage 12.5, with kidney expression increasing until stage 35. Expressed in the prospective posterior gut between stages 13 and 20, and in the deep foregut endoderm. Prior to neural crest cell migration, expressed in a domain flanking the neural crest on the lateral or epidermal side (the opposite side to wnt11/wnt11-r).

It is found in the secreted. It localises to the extracellular space. Its subcellular location is the extracellular matrix. Its function is as follows. Ligand for the frizzled7 transmembrane receptor. Primarily acts via non-canonical Wnt pathways mediated by either Ca(2+) and PKC, or by JNK and dvl2/dsh. Depending on the cellular context, can also signal via the canonical Wnt pathway mediated by beta-catenin and dvl2/dsh. May also inhibit canonical Wnt signaling. Maternally initiates dorsal/ventral axis formation by a canonical route, which signals via lrp6. In a complex with wnt5a, activates the canonical and non-canonical processes involved in axis formation. In the non-canonical pathway, acts through fzd7/fz7 to induce phosphorylation of dvl2/dsh. Signals through a non-canonical Wnt pathway to regulate convergent extension movements during gastrulation. Interactions with the secreted Wnt antagonist sfrp5 to coordinate foregut development, acting via a non-canonical Wnt pathway whereby sfrp5 restricts wnt11b activity to prevent inappropriate foregut formation. Mediates cardiogenesis via non-canonical Wnt signaling involving JNK-activation and PKC. Acts redundantly with wnt11/wnt11r during pronephros induction. In Xenopus laevis (African clawed frog), this protein is Protein Wnt-11b (wnt11b).